Reading from the N-terminus, the 629-residue chain is tRNA uridine 5-carboxymethylaminomethyl modification enzyme MnmG (629 aa).

FAD is bound by residues Gly14–Gly19, Val126, and Ser181. Residue Gly273 to Phe287 participates in NAD(+) binding. FAD is bound at residue Gln370.

Belongs to the MnmG family. In terms of assembly, homodimer. Heterotetramer of two MnmE and two MnmG subunits. The cofactor is FAD.

It is found in the cytoplasm. In terms of biological role, NAD-binding protein involved in the addition of a carboxymethylaminomethyl (cmnm) group at the wobble position (U34) of certain tRNAs, forming tRNA-cmnm(5)s(2)U34. This chain is tRNA uridine 5-carboxymethylaminomethyl modification enzyme MnmG, found in Geobacillus kaustophilus (strain HTA426).